The sequence spans 757 residues: Elongation factor G, mitochondrial (757 aa).

The region spanning 66–344 is the tr-type G domain; it reads DRMRNIGISA…VLDYLPCPME (279 aa). GTP contacts are provided by residues 75–82, 142–146, and 196–199; these read AHIDSGKT, DTPGH, and NKLD.

Belongs to the TRAFAC class translation factor GTPase superfamily. Classic translation factor GTPase family. EF-G/EF-2 subfamily.

It localises to the mitochondrion. The protein operates within protein biosynthesis; polypeptide chain elongation. Functionally, mitochondrial GTPase that catalyzes the GTP-dependent ribosomal translocation step during translation elongation. During this step, the ribosome changes from the pre-translocational (PRE) to the post-translocational (POST) state as the newly formed A-site-bound peptidyl-tRNA and P-site-bound deacylated tRNA move to the P and E sites, respectively. Catalyzes the coordinated movement of the two tRNA molecules, the mRNA and conformational changes in the ribosome. This Oryza sativa subsp. japonica (Rice) protein is Elongation factor G, mitochondrial.